A 313-amino-acid polypeptide reads, in one-letter code: Esterase mpl1 (313 aa).

Catalysis depends on charge relay system residues S174, D259, and H287.

The protein belongs to the LovG family.

It functions in the pathway mycotoxin biosynthesis. Functionally, esterase; part of the gene cluster that mediates the biosynthesis of the mycotoxin citrinin, a hepato-nephrotoxic compound to humans due to inhibition of respiration complex III. The pathway begins with the synthesis of a keto-aldehyde intermediate by the citrinin PKS (pksCT) from successive condensations of 4 malonyl-CoA units, presumably with a simple acetyl-CoA starter unit. Release of the keto-aldehyde intermediate is consistent with the presence of the C-terminal reductive release domain. Mp11 collaborates with pksCT by catalyzing the hydrolysis of ACP-bound acyl intermediates to free the ACP from stalled intermediates. Mpl2 then catalyzes the oxidation of the C-12 methyl of the ketone intermediate to an alcohol intermediate which is further oxidized by the oxidoreductase mpl7 to produce a bisaldehyde intermediate. The fourth catalytic step is catalyzed by the mpl4 aldehyde dehydrogenase. The final transformation is the reduction of C-3 by mpl6 to provide the chemically stable citrinin nucleus. The sequence is that of Esterase mpl1 from Monascus purpureus (Red mold).